Here is a 1047-residue protein sequence, read N- to C-terminus: uncharacterized protein (1047 aa).

Position 17 is an N6-acetyllysine (K17). 2 disordered regions span residues 172 to 208 (PPCS…GSFS) and 236 to 283 (RNSK…PQAL). S208 carries the post-translational modification Phosphoserine. Polar residues predominate over residues 237–254 (NSKQAMSEGPSSPWTQLA). Positions 268–283 (HYPPPHHPPPHPPQAL) are enriched in pro residues. Phosphoserine occurs at positions 299 and 391. Position 397 is a phosphothreonine (T397). 7 disordered regions span residues 448–469 (EKLQ…DSPV), 482–504 (ECQS…PVID), 519–567 (PAPE…LRGS), 668–690 (PSTP…GPIG), 714–763 (VAVA…GDSL), 931–1004 (EAGA…TLKA), and 1021–1047 (PTWG…SHHL). 3 positions are modified to phosphoserine: S455, S496, and S497. Low complexity-rich tracts occupy residues 729–741 (PARA…ARDP) and 751–762 (PAPASTSAPGDS). Phosphoserine occurs at positions 936, 956, 988, and 996. The span at 978 to 996 (AAAGEESCGASPTPATSAS) shows a compositional bias: low complexity.

This is an uncharacterized protein from Homo sapiens (Human).